The chain runs to 710 residues: Polyribonucleotide nucleotidyltransferase (710 aa).

The Mg(2+) site is built by D491 and D497. One can recognise a KH domain in the interval 559-618; that stretch reads PRLITIKINPEKIRDVIGKGGAVIRALTEETGTQIDISDEGVVTIASVDAAAGQEAKRRI. Positions 628-696 constitute an S1 motif domain; sequence GKVYEGTVLK…DRGRLKLSMK (69 aa).

The protein belongs to the polyribonucleotide nucleotidyltransferase family. Requires Mg(2+) as cofactor.

It is found in the cytoplasm. The enzyme catalyses RNA(n+1) + phosphate = RNA(n) + a ribonucleoside 5'-diphosphate. Functionally, involved in mRNA degradation. Catalyzes the phosphorolysis of single-stranded polyribonucleotides processively in the 3'- to 5'-direction. The protein is Polyribonucleotide nucleotidyltransferase of Herminiimonas arsenicoxydans.